Reading from the N-terminus, the 352-residue chain is tRNA(Ile)-lysidine synthase (352 aa).

58 to 63 (SGGADS) contacts ATP.

This sequence belongs to the tRNA(Ile)-lysidine synthase family.

The protein localises to the cytoplasm. The catalysed reaction is cytidine(34) in tRNA(Ile2) + L-lysine + ATP = lysidine(34) in tRNA(Ile2) + AMP + diphosphate + H(+). In terms of biological role, ligates lysine onto the cytidine present at position 34 of the AUA codon-specific tRNA(Ile) that contains the anticodon CAU, in an ATP-dependent manner. Cytidine is converted to lysidine, thus changing the amino acid specificity of the tRNA from methionine to isoleucine. The sequence is that of tRNA(Ile)-lysidine synthase from Streptomyces coelicolor (strain ATCC BAA-471 / A3(2) / M145).